The chain runs to 662 residues: Transketolase (662 aa).

H28 contributes to the substrate binding site. Residues H68 and 115–117 (GPL) each bind thiamine diphosphate. D156 provides a ligand contact to Mg(2+). Thiamine diphosphate contacts are provided by G157 and N186. Mg(2+) contacts are provided by N186 and I188. The substrate site is built by H261, R356, and S383. Thiamine diphosphate is bound at residue H261. E410 serves as the catalytic Proton donor. F436 provides a ligand contact to thiamine diphosphate. Positions 460, 468, and 519 each coordinate substrate.

The protein belongs to the transketolase family. In terms of assembly, homodimer. Requires Mg(2+) as cofactor. Ca(2+) is required as a cofactor. The cofactor is Mn(2+). Co(2+) serves as cofactor. It depends on thiamine diphosphate as a cofactor.

It catalyses the reaction D-sedoheptulose 7-phosphate + D-glyceraldehyde 3-phosphate = aldehydo-D-ribose 5-phosphate + D-xylulose 5-phosphate. The protein operates within carbohydrate biosynthesis; Calvin cycle. It participates in carbohydrate degradation; pentose phosphate pathway. Functionally, catalyzes the transfer of a two-carbon ketol group from a ketose donor to an aldose acceptor, via a covalent intermediate with the cofactor thiamine pyrophosphate. The sequence is that of Transketolase (tkt) from Staphylococcus epidermidis (strain ATCC 12228 / FDA PCI 1200).